Reading from the N-terminus, the 139-residue chain is TDP-4-oxo-6-deoxy-alpha-D-glucose-3,4-oxoisomerase (139 aa).

The Proton acceptor role is filled by histidine 49.

In terms of assembly, homodimer.

The catalysed reaction is dTDP-4-dehydro-6-deoxy-alpha-D-glucose = dTDP-3-dehydro-6-deoxy-alpha-D-galactose. Mediates the isomerization of dTDP-6-deoxy-D-xylohex-4-ulose into dTDP-6-deoxy-D-xylohex-3-ulose in the biosynthesis of dTDP-3-acetamido-3,6-dideoxy-alpha-D-galactose, a glycan chain of the S-layer. This Aneurinibacillus thermoaerophilus protein is TDP-4-oxo-6-deoxy-alpha-D-glucose-3,4-oxoisomerase (fdtA).